A 2549-amino-acid polypeptide reads, in one-letter code: Serine/threonine-protein kinase mTOR (2549 aa).

Methionine 1 carries the post-translational modification N-acetylmethionine. The segment at 1 to 651 is interaction with NBN; the sequence is MLGTGPAVAT…HVVSQTAVQV (651 aa). 32 HEAT repeats span residues 16–53, 55–99, 100–137, 138–179, 180–220, 222–276, 277–313, 314–364, 365–409, 410–445, 446–494, 495–529, 530–563, 564–596, 597–636, 637–683, 686–724, 727–766, 769–811, 814–853, 857–893, 894–942, 943–988, 989–1027, 1029–1068, 1069–1105, 1106–1144, 1145–1188, 1189–1225, 1226–1273, 1274–1311, and 1312–1345; these read SSNVSVLQQFASGLKSRNEETRAKAAKELQHYVTMELR, MSQE…VEGG, NSTRIGRFANYLRNLLPSSDPVVMEMASKAIGRLAMAG, DTFT…AISV, PTFF…LILT, QREP…RISS, MEGERLREEMEEITQQQLVHDKYCKDLMGFGTKPRHI, TPFT…CCRD, LMEE…AFTD, TQYLQDTMNHVLSCVKKEKERTAAFQALGLLSVAVR, SEFK…RAMG, PGIQQDIKELLEPMLAVGLSPALTAVLYDLSRQIP, QLKKDIQDGLLKMLSLVLMHKPLRHPGMPKGLAH, QLASPGLTTLPEASDVASITLALRTLGSFEFEG, HSLTQFVRHCADHFLNSEHKEIRMEAARTCSRLLTPSIHL, ISGH…DERF, HLAQAENLQALFVALNDQVFEIRELAICTVGRLSSMNPA, MPFLRKMLIQILTELEHSGIGRIKEQSARMLGHLVSNAPR, RPYM…VSGL, RKWVDELFIIIMDMLQDSSLLAKRQVALWTLGQLVASTGY, PYRKYPTLLEVLLNFLKTEQNQGTRREAIRVLGLLGA, LDPY…GNLP, LDEF…KCVQ, FLPQVMPTFLNVIRVCDGAIREFLFQQLGMLVSFVKSHI, PYMDEIVTLMREFWVMNTSIQSTIILLIEQIVVALGGEFK, LYLPQLIPHMLRVFMHDNSQGRIVSIKLLAAIQLFGA, NLDDYLHLLLPPIVKLFDAPEVPLPSRKAALETVDRLTE, SLDF…GKKY, QIFIPMVNKVLVRHRINHQRYDVLICRIVKGYTLADE, EEDP…GAAR, RVSKDDWLEWLRRLSLELLKDSSSPSLRSCWALAQAYN, and PMARDLFNAAFVSCWSELNEDQQDELIRSIELAL. A Phosphoserine modification is found at serine 567. Threonine 1162 carries the post-translational modification Phosphothreonine. The residue at position 1218 (lysine 1218) is an N6-acetyllysine. Serine 1261 carries the phosphoserine modification. 16 TPR repeats span residues 1346-1382, 1383-1408, 1409-1442, 1443-1473, 1474-1507, 1508-1541, 1542-1574, 1575-1614, 1615-1649, 1650-1693, 1694-1731, 1732-1786, 1787-1846, 1898-1930, 1931-1970, and 1971-2005; these read TSQDIAEVTQTLLNLAEFMEHSDKGPLPLRDDNGIVL, LGERAAKCRAYAKALHYKELEFQKGP, TPAILESLISINNKLQQPEAASGVLEYAMKHFGE, LEIQATWYEKLHEWEDALVAYDKKMDTNKED, PELMLGRMRCLEALGEWGQLHQQCCEKWTLVNDE, TQAKMARMAAAAAWGLGQWDSMEEYTCMIPRDTH, DGAFYRAVLALHQDLFSLAQQCIDKARDLLDAE, LTAMAGESYSRAYGAMVSCHMLSELEEVIQYKLVPERREI, IRQIWWERLQGCQRIVEDWQKILMVRSLVVSPHED, MRTW…PTAH, PQVTYAYMKNMWKSARKIDAFQHMQHFVQTMQQQAQHA, IATE…DRSW, YKAW…STEG, NNLQDTLRVLTLWFDYGHWPDVNEALVEGVKAI, QIDTWLQVIPQLIARIDTPRPLVGRLIHQLLTDIGRYHPQ, and ALIYPLTVASKSTTTARHNAANKILKNMCEHSNTL. Residues 1382 to 1982 form the FAT domain; the sequence is LLGERAAKCR…IYPLTVASKS (601 aa). 3 residues coordinate 1D-myo-inositol hexakisphosphate: lysine 1662, lysine 1702, and arginine 1749. Low complexity predominate over residues 1825–1860; sequence ITNATTAATTAASAAAATSTEGSNSESEAESNENSP. Residues 1825–1867 form a disordered region; it reads ITNATTAATTAASAAAATSTEGSNSESEAESNENSPTPSPLQK. Residues 2012–2144 form a sufficient for interaction with the FKBP1A/rapamycin complex region; the sequence is VSEELIRVAI…DLELAVPGTY (133 aa). Lysine 2066 participates in a covalent cross-link: Glycyl lysine isopeptide (Lys-Gly) (interchain with G-Cter in ubiquitin). The 314-residue stretch at 2156–2469 folds into the PI3K/PI4K catalytic domain; that stretch reads IAPSLQVITS…GVELGEPAHK (314 aa). Serine 2159 carries the phosphoserine; by TBK1 modification. A G-loop region spans residues 2162 to 2168; it reads VITSKQR. The residue at position 2164 (threonine 2164) is a Phosphothreonine. The ATP site is built by serine 2165 and glutamine 2167. Threonine 2173 is subject to Phosphothreonine; by PKB/AKT1. ATP contacts are provided by leucine 2185, lysine 2187, glutamate 2190, tyrosine 2225, glycine 2238, tryptophan 2239, valine 2240, and threonine 2245. The interaction with MLST8 stretch occupies residues 2258–2296; sequence KILLNIEHRIMLRMAPDYDHLTLMQKVEVFEHAVNNTAG. Positions 2335–2343 are catalytic loop; the sequence is GLGDRHPSN. Asparagine 2343 is a Mg(2+) binding site. Residues methionine 2345 and isoleucine 2356 each coordinate ATP. Positions 2355–2380 are activation loop; it reads HIDFGDCFEVAMTREKFPEKIPFRLT. Aspartate 2357 lines the Mg(2+) pocket. Threonine 2446 carries the post-translational modification Phosphothreonine; by RPS6KB1. Serine 2448 is subject to Phosphoserine; by RPS6KB1. A phosphoserine mark is found at serine 2478 and serine 2481. Positions 2517-2549 constitute an FATC domain; sequence DTLDVPTQVELLIKQATSHENLCQCYIGWCPFW.

The protein belongs to the PI3/PI4-kinase family. Part of the mechanistic target of rapamycin complex 1 (mTORC1) which contains MTOR, MLST8 and RPTOR. The mTORC1 complex is a 1 Md obligate dimer of two stoichiometric heterotetramers with overall dimensions of 290 A x 210 A x 135 A. It has a rhomboid shape and a central cavity, the dimeric interfaces are formed by interlocking interactions between the two MTOR and the two RPTOR subunits. The MLST8 subunit forms distal foot-like protuberances, and contacts only one MTOR within the complex, while the small AKT1S1/PRAS40 localizes to the midsection of the central core, in close proximity to RPTOR. mTORC1 associates with AKT1S1/PRAS40, which inhibits its activity by blocking MTOR substrate-recruitment site. Component of the mechanistic target of rapamycin complex 2 (mTORC2), consisting in two heterotretramers composed of MTOR, MLST8, RICTOR and MAPKAP1/SIN1. Interacts with PLPP7 and PML. Interacts with PRR5 and RICTOR; the interaction is direct within the mTORC2 complex and interaction with RICTOR is enhanced by deubiquitination of RICTOR by USP9X. mTORC1 and mTORC2 associate with DEPTOR, which regulates their activity. Interacts with WAC; WAC positively regulates MTOR activity by promoting the assembly of the TTT complex composed of TELO2, TTI1 and TTI2 and the RUVBL complex composed of RUVBL1 and RUVBL2 into the TTT-RUVBL complex which leads to the dimerization of the mTORC1 complex and its subsequent activation. Interacts with UBQLN1. Interacts with TTI1 and TELO2. Interacts with CLIP1; phosphorylates and regulates CLIP1. Interacts with NBN. Interacts with HTR6. Interacts with BRAT1. Interacts with MEAK7 (via C-terminal domain); the interaction increases upon nutrient stimulation. Interacts with TM4SF5; the interaction is positively regulated by arginine and is negatively regulated by leucine. Interacts with GPR137B. Interacts with NCKAP1L. Interacts with TPCN1 and TPCN2; the interaction is required for TPCN1 and TPCN2 sensitivity to ATP. Interacts with ATP6V1A and with CRYAB, forming a ternary complex. Interacts with SLC38A7; this interaction mediates the recruitment of mTORC1 to the lysosome and its subsequent activation. Interacts with TSPAN8. Post-translationally, autophosphorylates when part of mTORC1 or mTORC2. Phosphorylation at Ser-1261, Ser-2159 and Thr-2164 promotes autophosphorylation. Phosphorylated at Ser-2448 by RPS6KB1. Phosphorylation in the kinase domain modulates the interactions of MTOR with RPTOR and AKT1S1/PRAS40 and leads to increased intrinsic mTORC1 kinase activity. Phosphorylation at Ser-2159 by TBK1 in response to growth factors and pathogen recognition receptors promotes mTORC1 activity. Phosphorylation at Ser-2159 by TBK1 in response to EGF growth factor promotes mTORC2 activity, leading to AKT1 phosphorylation and activation. Phosphorylation at Thr-2173 in the ATP-binding region by AKT1 strongly reduces kinase activity. In terms of processing, ubiquitinated at Lys-2066 by the SCF(FBXO22) complex via 'Lys-27'-linked ubiquitination prevents mTORC1 substrate recruitment.

The protein localises to the lysosome membrane. It is found in the endoplasmic reticulum membrane. It localises to the golgi apparatus membrane. Its subcellular location is the cell membrane. The protein resides in the mitochondrion outer membrane. The protein localises to the cytoplasm. It is found in the nucleus. It localises to the PML body. Its subcellular location is the microsome membrane. The protein resides in the cytoplasmic vesicle. The protein localises to the phagosome. The enzyme catalyses L-seryl-[protein] + ATP = O-phospho-L-seryl-[protein] + ADP + H(+). It catalyses the reaction L-threonyl-[protein] + ATP = O-phospho-L-threonyl-[protein] + ADP + H(+). The catalysed reaction is L-tyrosyl-[protein] + ATP = O-phospho-L-tyrosyl-[protein] + ADP + H(+). Its activity is regulated as follows. The mTORC1 complex is activated in response to nutrients, growth factors or amino acids: activation requires relocalization of the mTORC1 complex to lysosomes that is mediated by the Ragulator complex, SLC38A9, and the Rag GTPases RagA/RRAGA, RagB/RRAGB, RagC/RRAGC and RagD/RRAGD. Activation of mTORC1 by growth factors such as insulin involves AKT1-mediated phosphorylation of TSC1-TSC2, which leads to the activation of the RHEB GTPase a potent activator of the protein kinase activity of mTORC1. Insulin-stimulated and amino acid-dependent phosphorylation at Ser-1261 promotes autophosphorylation and the activation of mTORC1. On the other hand, low cellular energy levels can inhibit mTORC1 through activation of PRKAA1 while hypoxia inhibits mTORC1 through a REDD1-dependent mechanism which may also require PRKAA1. The kinase activity of MTOR within the mTORC1 complex is positively regulated by MLST8. The kinase activity of MTOR is inhibited by DEPTOR and AKT1S1. The non-canonical mTORC1 complex is independent of the RHEB GTPase and specifically mediates phosphorylation of MiT/TFE factors TFEB and TFE3 but not other mTORC1 substrates: it is activated by FLCN, which activates Rag GTPases RagC/RRAGC and RagD/RRAGD. MTOR is the target of the immunosuppressive and anti-cancer drug rapamycin which acts in complex with FKBP1A/FKBP12, and specifically inhibits its kinase activity. mTORC2 is also activated by growth factors, but seems to be nutrient-insensitive. mTORC2 associates and is directly activated by ribosomes. mTORC2 may also be regulated by RHEB but in an indirect manner through the PI3K signaling pathway. Serine/threonine protein kinase which is a central regulator of cellular metabolism, growth and survival in response to hormones, growth factors, nutrients, energy and stress signals. MTOR directly or indirectly regulates the phosphorylation of at least 800 proteins. Functions as part of 2 structurally and functionally distinct signaling complexes mTORC1 and mTORC2 (mTOR complex 1 and 2). In response to nutrients, growth factors or amino acids, mTORC1 is recruited to the lysosome membrane and promotes protein, lipid and nucleotide synthesis by phosphorylating key regulators of mRNA translation and ribosome synthesis. This includes phosphorylation of EIF4EBP1 and release of its inhibition toward the elongation initiation factor 4E (eiF4E). Moreover, phosphorylates and activates RPS6KB1 and RPS6KB2 that promote protein synthesis by modulating the activity of their downstream targets including ribosomal protein S6, eukaryotic translation initiation factor EIF4B, and the inhibitor of translation initiation PDCD4. Stimulates the pyrimidine biosynthesis pathway, both by acute regulation through RPS6KB1-mediated phosphorylation of the biosynthetic enzyme CAD, and delayed regulation, through transcriptional enhancement of the pentose phosphate pathway which produces 5-phosphoribosyl-1-pyrophosphate (PRPP), an allosteric activator of CAD at a later step in synthesis, this function is dependent on the mTORC1 complex. Regulates ribosome synthesis by activating RNA polymerase III-dependent transcription through phosphorylation and inhibition of MAF1 an RNA polymerase III-repressor. Activates dormant ribosomes by mediating phosphorylation of SERBP1, leading to SERBP1 inactivation and reactivation of translation. In parallel to protein synthesis, also regulates lipid synthesis through SREBF1/SREBP1 and LPIN1. To maintain energy homeostasis mTORC1 may also regulate mitochondrial biogenesis through regulation of PPARGC1A. In the same time, mTORC1 inhibits catabolic pathways: negatively regulates autophagy through phosphorylation of ULK1. Under nutrient sufficiency, phosphorylates ULK1 at 'Ser-758', disrupting the interaction with AMPK and preventing activation of ULK1. Also prevents autophagy through phosphorylation of the autophagy inhibitor DAP. Also prevents autophagy by phosphorylating RUBCNL/Pacer under nutrient-rich conditions. Prevents autophagy by mediating phosphorylation of AMBRA1, thereby inhibiting AMBRA1 ability to mediate ubiquitination of ULK1 and interaction between AMBRA1 and PPP2CA. mTORC1 exerts a feedback control on upstream growth factor signaling that includes phosphorylation and activation of GRB10 a INSR-dependent signaling suppressor. Among other potential targets mTORC1 may phosphorylate CLIP1 and regulate microtubules. The mTORC1 complex is inhibited in response to starvation and amino acid depletion. The non-canonical mTORC1 complex, which acts independently of RHEB, specifically mediates phosphorylation of MiT/TFE factors TFEB and TFE3 in the presence of nutrients, promoting their cytosolic retention and inactivation. Upon starvation or lysosomal stress, inhibition of mTORC1 induces dephosphorylation and nuclear translocation of TFEB and TFE3, promoting their transcription factor activity. The mTORC1 complex regulates pyroptosis in macrophages by promoting GSDMD oligomerization. MTOR phosphorylates RPTOR which in turn inhibits mTORC1. As part of the mTORC2 complex, MTOR transduces signals from growth factors to pathways involved in proliferation, cytoskeletal organization, lipogenesis and anabolic output. In response to growth factors, mTORC2 phosphorylates and activates AGC protein kinase family members, including AKT (AKT1, AKT2 and AKT3), PKC (PRKCA, PRKCB and PRKCE) and SGK1. In contrast to mTORC1, mTORC2 is nutrient-insensitive. mTORC2 plays a critical role in AKT1 activation by mediating phosphorylation of different sites depending on the context, such as 'Thr-450', 'Ser-473', 'Ser-477' or 'Thr-479', facilitating the phosphorylation of the activation loop of AKT1 on 'Thr-308' by PDPK1/PDK1 which is a prerequisite for full activation. mTORC2 also regulates the phosphorylation of SGK1 at 'Ser-422'. mTORC2 may regulate the actin cytoskeleton, through phosphorylation of PRKCA, PXN and activation of the Rho-type guanine nucleotide exchange factors RHOA and RAC1A or RAC1B. The mTORC2 complex also phosphorylates various proteins involved in insulin signaling, such as FBXW8 and IGF2BP1. May also regulate insulin signaling by acting as a tyrosine protein kinase that catalyzes phosphorylation of IGF1R and INSR. Regulates osteoclastogenesis by adjusting the expression of CEBPB isoforms. Plays an important regulatory role in the circadian clock function; regulates period length and rhythm amplitude of the suprachiasmatic nucleus (SCN) and liver clocks. The polypeptide is Serine/threonine-protein kinase mTOR (Mus musculus (Mouse)).